We begin with the raw amino-acid sequence, 31 residues long: Cliotide T10 (31 aa).

The segment at residues 1 to 31 (GIPCGESCVYIPCTVTALLGCSCKDKVCYKN) is a cross-link (cyclopeptide (Gly-Asn)). 3 disulfides stabilise this stretch: C4–C21, C8–C23, and C13–C28.

Post-translationally, contains 3 disulfide bonds. This is a cyclic peptide. In terms of tissue distribution, expressed in seed, root and nodule but not in flower, stem, shoot, leaf and pod (at protein level).

Probably participates in a plant defense mechanism. The protein is Cliotide T10 of Clitoria ternatea (Butterfly pea).